Consider the following 388-residue polypeptide: Succinate--CoA ligase [ADP-forming] subunit beta (388 aa).

The ATP-grasp domain occupies 9–244 (KQLFARYGMP…PSQEDAREAH (236 aa)). ATP is bound by residues Lys46, 53–55 (GRG), Glu99, Thr102, and Glu107. Residues Asn199 and Asp213 each coordinate Mg(2+). Substrate is bound by residues Asn264 and 321–323 (GIV).

Belongs to the succinate/malate CoA ligase beta subunit family. Heterotetramer of two alpha and two beta subunits. Requires Mg(2+) as cofactor.

It carries out the reaction succinate + ATP + CoA = succinyl-CoA + ADP + phosphate. The catalysed reaction is GTP + succinate + CoA = succinyl-CoA + GDP + phosphate. It participates in carbohydrate metabolism; tricarboxylic acid cycle; succinate from succinyl-CoA (ligase route): step 1/1. Succinyl-CoA synthetase functions in the citric acid cycle (TCA), coupling the hydrolysis of succinyl-CoA to the synthesis of either ATP or GTP and thus represents the only step of substrate-level phosphorylation in the TCA. The beta subunit provides nucleotide specificity of the enzyme and binds the substrate succinate, while the binding sites for coenzyme A and phosphate are found in the alpha subunit. The polypeptide is Succinate--CoA ligase [ADP-forming] subunit beta (Yersinia pseudotuberculosis serotype O:1b (strain IP 31758)).